The chain runs to 483 residues: Galactose-3-O-sulfotransferase 4 (483 aa).

The Cytoplasmic segment spans residues 1-18 (MGVLSPTRTMRLWGPRSL). The helical; Signal-anchor for type II membrane protein transmembrane segment at 19 to 39 (GVALGVFMTIGFALQLLGGPF) threads the bilayer. Residues 40–483 (QRRLPGLQLR…PLKTSRRPSP (444 aa)) are Lumenal-facing. The segment at 225-248 (KRGNPHVSRDPNPPQLPSGAGPPA) is disordered. A glycan (N-linked (GlcNAc...) asparagine) is linked at Asn-371.

This sequence belongs to the galactose-3-O-sulfotransferase family. The cofactor is Mn(2+).

Its subcellular location is the golgi apparatus. The protein localises to the golgi stack membrane. It functions in the pathway protein modification; carbohydrate sulfation. Functionally, catalyzes the transfer of sulfate to beta-1,3-linked galactose residues in O-linked glycoproteins. Good substrates include asialofetuin, Gal-beta-1,3-GalNAc and Gal-beta-1,3 (GlcNAc-beta-1,6)GalNAc. The polypeptide is Galactose-3-O-sulfotransferase 4 (GAL3ST4) (Bos taurus (Bovine)).